The following is a 261-amino-acid chain: MSARKFVVGGNWKCNGTLASIETLTKGVAASVDAELAKKVEVIVGVPFIYIPKVQQILAGEANGANILVSAENAWTKSGAYTGEVHVGMLVDCQVPYVILGHSERRQIFHESNEQVAEKVKVAIDAGLKVIACIGETEAQRIANQTEEVVAAQLKAINNAISKEAWKNIILAYEPVWAIGTGKTATPDQAQEVHQYIRKWMTENISKEVAEATRIQYGGSVNPANCNELAKKADIDGFLVGGASLDAAKFKTIINSVSEKF.

D-glyceraldehyde 3-phosphate contacts are provided by asparagine 11 and lysine 13. The active-site Electrophile is histidine 102. The Proton acceptor role is filled by glutamate 174. 3 residues coordinate D-glyceraldehyde 3-phosphate: glycine 180, leucine 239, and glycine 241.

This sequence belongs to the triosephosphate isomerase family. Homodimer.

The enzyme catalyses D-glyceraldehyde 3-phosphate = dihydroxyacetone phosphate. The protein operates within carbohydrate biosynthesis; gluconeogenesis. Its pathway is carbohydrate degradation; glycolysis; D-glyceraldehyde 3-phosphate from glycerone phosphate: step 1/1. Catalyzes the interconversion of glyceraldehyde 3-phosphate and dihydroxyacetone phosphate in the glycolytic and gluconeogenic pathways. This chain is Triosephosphate isomerase, found in Entamoeba histolytica (strain ATCC 30459 / HM-1:IMSS / ABRM).